Here is a 201-residue protein sequence, read N- to C-terminus: Small ribosomal subunit protein uS4B (201 aa).

The 64-residue stretch at 93–156 (QRLDTVVYRL…RSLAVVRESL (64 aa)) folds into the S4 RNA-binding domain.

This sequence belongs to the universal ribosomal protein uS4 family. As to quaternary structure, part of the 30S ribosomal subunit. Contacts protein S5. The interaction surface between S4 and S5 is involved in control of translational fidelity.

Its function is as follows. One of the primary rRNA binding proteins, it binds directly to 16S rRNA where it nucleates assembly of the body of the 30S subunit. Functionally, with S5 and S12 plays an important role in translational accuracy. The protein is Small ribosomal subunit protein uS4B of Symbiobacterium thermophilum (strain DSM 24528 / JCM 14929 / IAM 14863 / T).